A 395-amino-acid chain; its full sequence is Putative gustatory receptor 58a (395 aa).

Topologically, residues 1 to 32 (MLLKFMYIYGIGCGLMPAPLKKGQFLLGYKQR) are cytoplasmic. A helical transmembrane segment spans residues 33 to 53 (WYLIYTACLHGGLLTVLPFTF). At 54–72 (PHYMYDDSYMSSNPVLKWT) the chain is on the extracellular side. The chain crosses the membrane as a helical span at residues 73 to 93 (FNLTNITRIMAMFSGVLLMWF). Over 94–131 (RRKRILNLGENLILHCLKCKTLDNRSKKYSKLRKRVRN) the chain is Cytoplasmic. Residues 132-152 (VLFQMLLVANLSILLGALILF) form a helical membrane-spanning segment. The Extracellular segment spans residues 153 to 169 (RIHSVQRISKTAMIVAH). The helical transmembrane segment at 170–190 (ITQFIYVVFMMTGICVILLVL) threads the bilayer. Topologically, residues 191 to 250 (HWQSERLQIALKDLCSFLNHEERNSLTLSENKANRSLGKLAKLFKLFAENQRLVREVFRT) are cytoplasmic. Residues 251 to 271 (FDLPIALLLLKMFVTNVNLVY) form a helical membrane-spanning segment. Over 272 to 288 (HGVQFGNDTIETSSYTR) the chain is Extracellular. A glycan (N-linked (GlcNAc...) asparagine) is linked at Asn-278. Residues 289–309 (IVGQWVVISHYWSAVLLMNVV) traverse the membrane as a helical segment. Topologically, residues 310–366 (DDVTRRSDLKMGDLLREFSHLELVKRDFHLQLELFSDHLRCHPSTYKVCGLFIFNKQ) are cytoplasmic. Residues 367–387 (TSLAYFFYVLVQVLVLVQFDL) form a helical membrane-spanning segment. Residues 388 to 395 (KNKVEKRN) are Extracellular-facing.

This sequence belongs to the insect chemoreceptor superfamily. Gustatory receptor (GR) family. Gr22e subfamily. Expressed in the adult labellar chemosensory neurons.

The protein resides in the cell membrane. Probable gustatory receptor which mediates acceptance or avoidance behavior, depending on its substrates. The sequence is that of Putative gustatory receptor 58a (Gr58a) from Drosophila melanogaster (Fruit fly).